The chain runs to 428 residues: Maltoporin (428 aa).

The N-terminal stretch at 1 to 24 (MKSMRILPISLTIMAGLLSIEASA) is a signal peptide.

It belongs to the porin LamB (TC 1.B.3) family. Homotrimer formed of three 18-stranded antiparallel beta-barrels, containing three independent channels.

It is found in the cell outer membrane. It catalyses the reaction beta-maltose(in) = beta-maltose(out). Functionally, involved in the transport of maltose and maltodextrins. The polypeptide is Maltoporin (Photorhabdus laumondii subsp. laumondii (strain DSM 15139 / CIP 105565 / TT01) (Photorhabdus luminescens subsp. laumondii)).